Reading from the N-terminus, the 277-residue chain is Diaminopimelate epimerase (277 aa).

Substrate contacts are provided by Asn13, Gln46, and Asn66. Cys75 acts as the Proton donor in catalysis. Residues 76 to 77, Asn159, Asn192, and 210 to 211 contribute to the substrate site; these read GN and ER. The active-site Proton acceptor is the Cys219. 220–221 contributes to the substrate binding site; it reads GT.

Belongs to the diaminopimelate epimerase family. Homodimer.

It localises to the cytoplasm. The catalysed reaction is (2S,6S)-2,6-diaminopimelate = meso-2,6-diaminopimelate. It functions in the pathway amino-acid biosynthesis; L-lysine biosynthesis via DAP pathway; DL-2,6-diaminopimelate from LL-2,6-diaminopimelate: step 1/1. In terms of biological role, catalyzes the stereoinversion of LL-2,6-diaminopimelate (L,L-DAP) to meso-diaminopimelate (meso-DAP), a precursor of L-lysine and an essential component of the bacterial peptidoglycan. The chain is Diaminopimelate epimerase from Aromatoleum aromaticum (strain DSM 19018 / LMG 30748 / EbN1) (Azoarcus sp. (strain EbN1)).